A 102-amino-acid chain; its full sequence is Integration host factor subunit beta (102 aa).

This sequence belongs to the bacterial histone-like protein family. Heterodimer of an alpha and a beta chain.

This protein is one of the two subunits of integration host factor, a specific DNA-binding protein that functions in genetic recombination as well as in transcriptional and translational control. This Marinomonas sp. (strain MWYL1) protein is Integration host factor subunit beta.